The sequence spans 384 residues: Aurora kinase (384 aa).

Polar residues-rich tracts occupy residues 1–12 (MSYPNNKENSNN) and 19–29 (SVPSKQPQRVL). The tract at residues 1 to 100 (MSYPNNKENS…SSSSSSSQSV (100 aa)) is disordered. Positions 30-99 (QQQNTNINNH…SSSSSSSSQS (70 aa)) are enriched in low complexity. One can recognise a Protein kinase domain in the interval 110–360 (FDIGKLLGMG…LKDVINHPWI (251 aa)). ATP is bound by residues 116-124 (LGMGRFGHV) and Lys-139. Residue Asp-233 is the Proton acceptor of the active site.

Belongs to the protein kinase superfamily. Ser/Thr protein kinase family. Aurora subfamily. In terms of assembly, interacts with icpA. Forms a complex at the central spindle.

The protein resides in the cytoplasm. It is found in the chromosome. The protein localises to the centromere. Its subcellular location is the cytoskeleton. It localises to the spindle pole. The protein resides in the cleavage furrow. It is found in the cell projection. The protein localises to the neuron projection. The enzyme catalyses L-seryl-[protein] + ATP = O-phospho-L-seryl-[protein] + ADP + H(+). It catalyses the reaction L-threonyl-[protein] + ATP = O-phospho-L-threonyl-[protein] + ADP + H(+). Its function is as follows. Part of a chromosomal passenger complex. This Dictyostelium discoideum (Social amoeba) protein is Aurora kinase (aurK).